Here is a 61-residue protein sequence, read N- to C-terminus: Large ribosomal subunit protein uL30 (61 aa).

Belongs to the universal ribosomal protein uL30 family. As to quaternary structure, part of the 50S ribosomal subunit.

In Treponema pallidum subsp. pallidum (strain SS14), this protein is Large ribosomal subunit protein uL30.